Here is a 218-residue protein sequence, read N- to C-terminus: 3-dehydroquinate dehydratase (218 aa).

Residues 29 to 31 (EFR) and Arg-56 contribute to the 3-dehydroquinate site. His-116 functions as the Proton donor/acceptor in the catalytic mechanism. Lys-142 serves as the catalytic Schiff-base intermediate with substrate. 3 residues coordinate 3-dehydroquinate: Arg-180, Ser-200, and Gln-204.

The protein belongs to the type-I 3-dehydroquinase family. Homodimer.

The catalysed reaction is 3-dehydroquinate = 3-dehydroshikimate + H2O. Its pathway is metabolic intermediate biosynthesis; chorismate biosynthesis; chorismate from D-erythrose 4-phosphate and phosphoenolpyruvate: step 3/7. Involved in the third step of the chorismate pathway, which leads to the biosynthesis of aromatic amino acids. Catalyzes the cis-dehydration of 3-dehydroquinate (DHQ) and introduces the first double bond of the aromatic ring to yield 3-dehydroshikimate. The polypeptide is 3-dehydroquinate dehydratase (Methanococcus maripaludis (strain C6 / ATCC BAA-1332)).